Consider the following 408-residue polypeptide: UPF0754 membrane protein Tery_3973 (408 aa).

The next 2 membrane-spanning stretches (helical) occupy residues 4-24 (IWLY…TNDI) and 385-405 (IVNL…ILLV).

The protein belongs to the UPF0754 family.

The protein resides in the cell inner membrane. The chain is UPF0754 membrane protein Tery_3973 from Trichodesmium erythraeum (strain IMS101).